Consider the following 399-residue polypeptide: Serine palmitoyltransferase (399 aa).

Pyridoxal 5'-phosphate-binding positions include 113–114, His-213, Thr-241, and Ser-243; that span reads GF. Residue Lys-244 is modified to N6-(pyridoxal phosphate)lysine.

This sequence belongs to the class-II pyridoxal-phosphate-dependent aminotransferase family. Homodimer. Pyridoxal 5'-phosphate is required as a cofactor.

The protein resides in the cytoplasm. It localises to the cell inner membrane. The enzyme catalyses L-serine + hexadecanoyl-CoA + H(+) = 3-oxosphinganine + CO2 + CoA. It participates in lipid metabolism; sphingolipid metabolism. Its function is as follows. Catalyzes the condensation of L-serine with palmitoyl-CoA (hexadecanoyl-CoA) to produce 3-oxosphinganine. Exhibits a broad substrate specificity concerning the chain length and the degree of unsaturation of acyl-CoA. In Sphingobacterium multivorum, this protein is Serine palmitoyltransferase.